We begin with the raw amino-acid sequence, 383 residues long: 1-deoxy-D-xylulose 5-phosphate reductoisomerase (383 aa).

The NADPH site is built by T10, G11, S12, I13, G36, R37, N38, and N122. Residue K123 participates in 1-deoxy-D-xylulose 5-phosphate binding. E124 is a binding site for NADPH. D148 serves as a coordination point for Mn(2+). S149, E150, S174, and H197 together coordinate 1-deoxy-D-xylulose 5-phosphate. Position 150 (E150) interacts with Mn(2+). Position 203 (G203) interacts with NADPH. Residues S210, N215, K216, and E219 each contribute to the 1-deoxy-D-xylulose 5-phosphate site. Residue E219 coordinates Mn(2+).

This sequence belongs to the DXR family. It depends on Mg(2+) as a cofactor. Mn(2+) is required as a cofactor.

It carries out the reaction 2-C-methyl-D-erythritol 4-phosphate + NADP(+) = 1-deoxy-D-xylulose 5-phosphate + NADPH + H(+). It participates in isoprenoid biosynthesis; isopentenyl diphosphate biosynthesis via DXP pathway; isopentenyl diphosphate from 1-deoxy-D-xylulose 5-phosphate: step 1/6. Functionally, catalyzes the NADPH-dependent rearrangement and reduction of 1-deoxy-D-xylulose-5-phosphate (DXP) to 2-C-methyl-D-erythritol 4-phosphate (MEP). The chain is 1-deoxy-D-xylulose 5-phosphate reductoisomerase from Bacillus pumilus (strain SAFR-032).